Reading from the N-terminus, the 515-residue chain is Fibril protein (515 aa).

Met-1 is subject to Blocked amino end (Met). 4 helical regions span residues 21-34 (VKKYWWKNCVIQHV), 206-228 (HKFKMYETVNTLKYLLRRLFNLL), 357-376 (KIETVETVANEIAAAIAEKC), and 426-440 (SNEFLKYLNEALKDV).

The protein resides in the cytoplasm. It localises to the cytoskeleton. Acts as a cytoskeletal structure involved in the shape and motility of spiroplasmas. The chain is Fibril protein from Spiroplasma citri.